The primary structure comprises 164 residues: MPDRKGDRGRHQARKRAVDLLFEAEARGITAAEVAEARNALADNGADDIAPLNPYTVTVARGVTDHAAHIDDLISAHLQGWTLDRLPAVDRAVLRVAVWELLHAVDVPEPVAVDEAVELAKQLSTDDSPGFVNGVLGQVMLVTPQIRAAAAAVQASPDSGSATP.

It belongs to the NusB family.

Functionally, involved in transcription antitermination. Required for transcription of ribosomal RNA (rRNA) genes. Binds specifically to the boxA antiterminator sequence of the ribosomal RNA (rrn) operons. The sequence is that of Transcription antitermination protein NusB from Mycolicibacterium gilvum (strain PYR-GCK) (Mycobacterium gilvum (strain PYR-GCK)).